The following is a 214-amino-acid chain: Phosphoenolpyruvate guanylyltransferase (214 aa).

Positions 148, 163, and 166 each coordinate phosphoenolpyruvate.

The protein belongs to the CofC family.

It catalyses the reaction phosphoenolpyruvate + GTP + H(+) = enolpyruvoyl-2-diphospho-5'-guanosine + diphosphate. Its pathway is cofactor biosynthesis; coenzyme F420 biosynthesis. Guanylyltransferase that catalyzes the activation of phosphoenolpyruvate (PEP) as enolpyruvoyl-2-diphospho-5'-guanosine, via the condensation of PEP with GTP. It is involved in the biosynthesis of coenzyme F420, a hydride carrier cofactor. The protein is Phosphoenolpyruvate guanylyltransferase of Mycobacterium tuberculosis (strain KZN 1435 / MDR).